Consider the following 172-residue polypeptide: Adenylate kinase isoenzyme 6 (172 aa).

ATP-binding residues include glycine 13, glycine 15, lysine 16, threonine 17, and threonine 18. Positions 33-56 (NVGDLAREGELYDGFDEEYNCPIL) are NMPbind. The interval 108 to 118 (TRGYSEKKLND) is LID. 2 residues coordinate ATP: arginine 109 and lysine 148.

The protein belongs to the adenylate kinase family. AK6 subfamily. In terms of assembly, monomer and homodimer. Interacts with small ribosomal subunit protein uS11. Not a structural component of 43S pre-ribosomes, but transiently interacts with them by binding to uS11. Interacts with COIL (via C-terminus).

Its subcellular location is the cytoplasm. The protein resides in the nucleus. The protein localises to the nucleoplasm. It localises to the cajal body. The catalysed reaction is AMP + ATP = 2 ADP. It catalyses the reaction ATP + H2O = ADP + phosphate + H(+). In terms of biological role, broad-specificity nucleoside monophosphate (NMP) kinase that catalyzes the reversible transfer of the terminal phosphate group between nucleoside triphosphates and monophosphates. Also has ATPase activity. Involved in the late cytoplasmic maturation steps of the 40S ribosomal particles, specifically 18S rRNA maturation. While NMP activity is not required for ribosome maturation, ATPase activity is. Associates transiently with small ribosomal subunit protein uS11. ATP hydrolysis breaks the interaction with uS11. May temporarily remove uS11 from the ribosome to enable a conformational change of the ribosomal RNA that is needed for the final maturation step of the small ribosomal subunit. Its NMP activity may have a role in nuclear energy homeostasis. May be involved in regulation of Cajal body (CB) formation. This chain is Adenylate kinase isoenzyme 6, found in Oryctolagus cuniculus (Rabbit).